We begin with the raw amino-acid sequence, 94 residues long: Putative regulatory protein Tmel_0100 (94 aa).

Belongs to the RemA family.

The protein is Putative regulatory protein Tmel_0100 of Thermosipho melanesiensis (strain DSM 12029 / CIP 104789 / BI429).